A 78-amino-acid chain; its full sequence is Exodeoxyribonuclease 7 small subunit (78 aa).

It belongs to the XseB family. Heterooligomer composed of large and small subunits.

The protein localises to the cytoplasm. The catalysed reaction is Exonucleolytic cleavage in either 5'- to 3'- or 3'- to 5'-direction to yield nucleoside 5'-phosphates.. In terms of biological role, bidirectionally degrades single-stranded DNA into large acid-insoluble oligonucleotides, which are then degraded further into small acid-soluble oligonucleotides. The protein is Exodeoxyribonuclease 7 small subunit of Synechococcus sp. (strain JA-3-3Ab) (Cyanobacteria bacterium Yellowstone A-Prime).